The chain runs to 134 residues: Ribosome-binding factor A (134 aa).

Belongs to the RbfA family. In terms of assembly, monomer. Binds 30S ribosomal subunits, but not 50S ribosomal subunits or 70S ribosomes.

It is found in the cytoplasm. Functionally, one of several proteins that assist in the late maturation steps of the functional core of the 30S ribosomal subunit. Associates with free 30S ribosomal subunits (but not with 30S subunits that are part of 70S ribosomes or polysomes). Required for efficient processing of 16S rRNA. May interact with the 5'-terminal helix region of 16S rRNA. In Psychrobacter cryohalolentis (strain ATCC BAA-1226 / DSM 17306 / VKM B-2378 / K5), this protein is Ribosome-binding factor A.